A 578-amino-acid polypeptide reads, in one-letter code: MAVSWRSWLANEGVKHLCLFIWLSMNVLLFWKTFLLYNQGPEYHYLHQMLGLGLCLSRASASVLNLNCSLILLPMCRTLLAYLRGSQKVPSRRTRRLLDKSRTFHITCGVTICIFSGVHVAAHLVNALNFSVNYSEDFVELNAARYRDEDPRKLLFTTVPGLTGVCMVVVLFLMITASTYAIRVSNYDIFWYTHNLFFVFYMLLTLHVSGGLLKYQTNLDTHPPGCISLNRTSSQNISLPEYFSEHFHEPFPEGFSKPAEFTQHKFVKICMEEPRFQANFPQTWLWISGPLCLYCAERLYRYIRSNKPVTIISVMSHPSDVMEIRMVKENFKARPGQYITLHCPSVSALENHPFTLTMCPTETKATFGVHLKIVGDWTERFRDLLLPPSSQDSEILPFIQSRNYPKLYIDGPFGSPFEESLNYEVSLCVAGGIGVTPFASILNTLLDDWKPYKLRRLYFIWVCRDIQSFRWFADLLCMLHNKFWQENRPDYVNIQLYLSQTDGIQKIIGEKYHALNSRLFIGRPRWKLLFDEIAKYNRGKTVGVFCCGPNSLSKTLHKLSNQNNSYGTRFEYNKESFS.

At 1–16 the chain is on the cytoplasmic side; sequence MAVSWRSWLANEGVKH. A helical membrane pass occupies residues 17-37; sequence LCLFIWLSMNVLLFWKTFLLY. The Extracellular segment spans residues 38 to 62; the sequence is NQGPEYHYLHQMLGLGLCLSRASAS. One can recognise a Ferric oxidoreductase domain in the interval 58-303; that stretch reads RASASVLNLN…YCAERLYRYI (246 aa). A helical transmembrane segment spans residues 63–83; it reads VLNLNCSLILLPMCRTLLAYL. Topologically, residues 84-103 are cytoplasmic; that stretch reads RGSQKVPSRRTRRLLDKSRT. A helical membrane pass occupies residues 104–124; the sequence is FHITCGVTICIFSGVHVAAHL. The Extracellular portion of the chain corresponds to 125–154; that stretch reads VNALNFSVNYSEDFVELNAARYRDEDPRKL. N-linked (GlcNAc...) asparagine glycosylation occurs at asparagine 133. Residues 155–175 traverse the membrane as a helical segment; the sequence is LFTTVPGLTGVCMVVVLFLMI. The Cytoplasmic portion of the chain corresponds to 176 to 188; it reads TASTYAIRVSNYD. The helical transmembrane segment at 189 to 209 threads the bilayer; sequence IFWYTHNLFFVFYMLLTLHVS. Residues 210-424 lie on the Extracellular side of the membrane; it reads GGLLKYQTNL…SPFEESLNYE (215 aa). The interval 218 to 273 is E-loop; essential for H2O2 generating catalytic activity; sequence NLDTHPPGCISLNRTSSQNISLPEYFSEHFHEPFPEGFSKPAEFTQHKFVKICMEE. Asparagine 230 carries an N-linked (GlcNAc...) asparagine glycan. A mediates interaction with TLR4 region spans residues 248–575; sequence HEPFPEGFSK…YGTRFEYNKE (328 aa). The FAD-binding FR-type domain occupies 304 to 419; that stretch reads RSNKPVTIIS…DGPFGSPFEE (116 aa). A helical membrane pass occupies residues 425–445; the sequence is VSLCVAGGIGVTPFASILNTL. Residues 446-578 lie on the Cytoplasmic side of the membrane; the sequence is LDDWKPYKLR…RFEYNKESFS (133 aa).

In terms of assembly, interacts with protein disulfide isomerase. Interacts with, relocalizes and stabilizes CYBA/p22phox. Interacts with TLR4. Interacts with PPP1R15A. Interacts with LRRC8A; this interaction prevents the ubiquitin-mediated degradation of LRRC8A. The cofactor is heme. Deubiquitinated by USP19. Post-translationally, N-glycosylated and glycosylation is required for its proper function. In terms of processing, N-glycosylated. As to expression, expressed by distal tubular cells in kidney cortex and in endothelial cells (at protein level). Widely expressed. Strongly expressed in kidney and to a lower extent in heart, adipocytes, hepatoma, endothelial cells, skeletal muscle, brain, several brain tumor cell lines and airway epithelial cells.

Its subcellular location is the cytoplasm. The protein localises to the endoplasmic reticulum membrane. It is found in the cell membrane. The protein resides in the cell junction. It localises to the focal adhesion. Its subcellular location is the nucleus. The protein localises to the nucleolus. It is found in the perinuclear region. It catalyses the reaction NADPH + 2 O2 = 2 superoxide + NADP(+) + H(+). The enzyme catalyses NADPH + O2 + H(+) = H2O2 + NADP(+). Inhibited by plumbagin. Activated by phorbol 12-myristate 13-acetate (PMA). Activated by insulin. Inhibited by diphenylene iodonium. NADPH oxidase that catalyzes predominantly the reduction of oxygen to H2O2. Can also catalyze to a smaller extent, the reduction of oxygen to superoxide. May function as an oxygen sensor regulating the KCNK3/TASK-1 potassium channel and HIF1A activity. May regulate insulin signaling cascade. May play a role in apoptosis, bone resorption and lipolysaccharide-mediated activation of NFKB. May produce superoxide in the nucleus and play a role in regulating gene expression upon cell stimulation. Promotes ferroptosis, reactive oxygen species production and reduced glutathione (GSH) levels by activating NLRP3 inflammasome activation and cytokine release. Functionally, NADPH oxidase that catalyzes the generation of superoxide from molecular oxygen utilizing NADPH as an electron donor. Involved in redox signaling in vascular cells. Modulates the nuclear activation of ERK1/2 and the ELK1 transcription factor, and is capable of inducing nuclear DNA damage. In terms of biological role, lacks superoxide-generating NADPH oxidase activity. The protein is NADPH oxidase 4 (NOX4) of Homo sapiens (Human).